The sequence spans 133 residues: CDGSH iron-sulfur domain-containing protein 2 homolog (133 aa).

Topologically, residues 1 to 35 are lumenal; sequence MEPISHLVKSSLPNYLSSLPIPDSVGGWFKLSFKD. Residues 36–58 traverse the membrane as a helical segment; that stretch reads WLALIPPTVVVAGIGYTAYLAYC. Topologically, residues 59-133 are cytoplasmic; that stretch reads PAAKAICSAK…DNVGPIVIKK (75 aa). [2Fe-2S] cluster is bound by residues Cys100, Cys102, Cys111, and His115.

It belongs to the CISD protein family. CISD2 subfamily. [2Fe-2S] cluster is required as a cofactor.

It localises to the endoplasmic reticulum membrane. The chain is CDGSH iron-sulfur domain-containing protein 2 homolog from Drosophila yakuba (Fruit fly).